A 666-amino-acid polypeptide reads, in one-letter code: MASIFKIHSAYKPAGDQIKAIENIADSFQKGAEKVTLVGVTGSGKTFTMAQVIQNLGLPTLVLSHNKTLAAQLFREFKEFFPENAVEYFVSYYDYYQPEAYVPSSDTFIEKDSSINEEIDKLRLRATSSLLEREDVVIVSSVSCIYGLGSPEEYTNSVVALKTGDTIERDAVIRKLLHIQYNRNDIDFSRGNFRVRGDSIEIYPAYHTDGIRIEFFGDEIDSISRINPITAQTILKLEKTYIYPAKHFITSGPKVKVAIENIKAELEAQALFFRKNDKLLEAERIISRTNYDMEMLQEMGYCNGIENYSRHLTGRKAGERPACLIDYFQGEFLLIVDESHVTIPQIGGMFAGDKARKQTLVDFGFRLPSALDNRPLNFEEFETLTPKTLYVSATPADYEMEKSSKVVEQIIRPTGLLDPIVEVRSTKNQIEDLLVEIRKRIDVGERILITTLTKKMSEDLTDYYKEIGLQVAYLHSEVETLDRVAIIRDLRKGIYDVLIGINLLREGLDIPEVSLVAILDADKEGFLRNYKSLIQTVGRAARNVNGTAILYADKITDSMAKAIDETKRRRKIQEDHNLKFGITPLTIRKEVNDIIEREEKKRTSEDLVLEDVEKKFNSKKFPNKEVLKDKLREEMMKAAKELDFERAAILRDKMLSIQINDPSTEN.

Positions 26–183 constitute a Helicase ATP-binding domain; the sequence is DSFQKGAEKV…RKLLHIQYNR (158 aa). Position 39–46 (39–46) interacts with ATP; the sequence is GVTGSGKT. The Beta-hairpin motif lies at 92–115; the sequence is YYDYYQPEAYVPSSDTFIEKDSSI. The region spanning 429–591 is the Helicase C-terminal domain; sequence QIEDLLVEIR…ITPLTIRKEV (163 aa). The UVR domain occupies 625–660; sequence EVLKDKLREEMMKAAKELDFERAAILRDKMLSIQIN.

It belongs to the UvrB family. As to quaternary structure, forms a heterotetramer with UvrA during the search for lesions. Interacts with UvrC in an incision complex.

It localises to the cytoplasm. The UvrABC repair system catalyzes the recognition and processing of DNA lesions. A damage recognition complex composed of 2 UvrA and 2 UvrB subunits scans DNA for abnormalities. Upon binding of the UvrA(2)B(2) complex to a putative damaged site, the DNA wraps around one UvrB monomer. DNA wrap is dependent on ATP binding by UvrB and probably causes local melting of the DNA helix, facilitating insertion of UvrB beta-hairpin between the DNA strands. Then UvrB probes one DNA strand for the presence of a lesion. If a lesion is found the UvrA subunits dissociate and the UvrB-DNA preincision complex is formed. This complex is subsequently bound by UvrC and the second UvrB is released. If no lesion is found, the DNA wraps around the other UvrB subunit that will check the other stand for damage. This is UvrABC system protein B from Leptospira borgpetersenii serovar Hardjo-bovis (strain JB197).